Consider the following 213-residue polypeptide: Receptor-binding cancer antigen expressed on SiSo cells (213 aa).

At 1–6 (MAITQF) the chain is on the extracellular side. The chain crosses the membrane as a helical; Signal-anchor for type III membrane protein span at residues 7-27 (RLFKFCTCLATVFSFLKRLIC). The Cytoplasmic portion of the chain corresponds to 28 to 213 (RSGRGRKLSG…EQNKIGVKLS (186 aa)). The residue at position 36 (Ser-36) is a Phosphoserine. Thr-41 is modified (phosphothreonine). Tyr-94 bears the Phosphotyrosine mark. Residues 163-211 (EDAAWQAEEVLRQQKLADREKRAAEQQRKKMEKEAQRLMKKEQNKIGVK) adopt a coiled-coil conformation. Basic and acidic residues predominate over residues 178–206 (LADREKRAAEQQRKKMEKEAQRLMKKEQN). Positions 178–213 (LADREKRAAEQQRKKMEKEAQRLMKKEQNKIGVKLS) are disordered.

Homodimer. In terms of tissue distribution, widely expressed. Expressed in ovary, testis, prostate, thymus, muscle and heart, but not in small intestine, colon, lymph nodes, or peripherical blood lymphocytes. The protein is not detected in any of the above organs.

The protein localises to the golgi apparatus membrane. Its function is as follows. May participate in suppression of cell proliferation and induces apoptotic cell death through activation of interleukin-1-beta converting enzyme (ICE)-like proteases. The polypeptide is Receptor-binding cancer antigen expressed on SiSo cells (EBAG9) (Homo sapiens (Human)).